A 190-amino-acid chain; its full sequence is dCTP deaminase (190 aa).

113–118 serves as a coordination point for dCTP; sequence KSTYAR. The active-site Proton donor/acceptor is Glu-139. DCTP-binding residues include Gln-158, Tyr-172, Lys-181, and Gln-182.

Belongs to the dCTP deaminase family. In terms of assembly, homotrimer.

It carries out the reaction dCTP + H2O + H(+) = dUTP + NH4(+). It participates in pyrimidine metabolism; dUMP biosynthesis; dUMP from dCTP (dUTP route): step 1/2. In terms of biological role, catalyzes the deamination of dCTP to dUTP. The protein is dCTP deaminase of Chlamydia abortus (strain DSM 27085 / S26/3) (Chlamydophila abortus).